Consider the following 25-residue polypeptide: LASP1 neighbor protein (25 aa).

A helical membrane pass occupies residues 4–24 (IFILMFFAIIGLVILSYIIYL).

The protein resides in the membrane. In terms of biological role, may play a key role in the skin fibroblasts (FBs)-keratinocyte-like cells (KLCs). The polypeptide is LASP1 neighbor protein (Homo sapiens (Human)).